A 120-amino-acid polypeptide reads, in one-letter code: Flagellar protein FliT (120 aa).

The required for homodimerization stretch occupies residues 1–50 (MENLSPLLIEYQGLLKLIRNIKAMALNGLWDDVVEQEIVYIQSIERISQI). The interval 60–98 (VQLQFRQLLQDILDTESQVKELLQNRMQELAVLIQQSQN) is fliD binding.

Belongs to the FliT family. Homodimer. Interacts with FliD and FlhC.

It is found in the cytoplasm. Its subcellular location is the cytosol. In terms of biological role, dual-function protein that regulates the transcription of class 2 flagellar operons and that also acts as an export chaperone for the filament-capping protein FliD. As a transcriptional regulator, acts as an anti-FlhDC factor; it directly binds FlhC, thus inhibiting the binding of the FlhC/FlhD complex to class 2 promoters, resulting in decreased expression of class 2 flagellar operons. As a chaperone, effects FliD transition to the membrane by preventing its premature polymerization, and by directing it to the export apparatus. This is Flagellar protein FliT from Dickeya chrysanthemi (Pectobacterium chrysanthemi).